The following is an 804-amino-acid chain: Leucine--tRNA ligase (804 aa).

The 'HIGH' region signature appears at 40 to 51; sequence PYPSGAGLHVGH. Residues 576–580 carry the 'KMSKS' region motif; it reads KMSKS. K579 contributes to the ATP binding site.

Belongs to the class-I aminoacyl-tRNA synthetase family.

It localises to the cytoplasm. The catalysed reaction is tRNA(Leu) + L-leucine + ATP = L-leucyl-tRNA(Leu) + AMP + diphosphate. This is Leucine--tRNA ligase from Staphylococcus aureus (strain MRSA252).